The primary structure comprises 474 residues: L-arabinose isomerase (474 aa).

Residues E306, E331, H348, and H447 each contribute to the Mn(2+) site.

It belongs to the arabinose isomerase family. Mn(2+) is required as a cofactor.

It carries out the reaction beta-L-arabinopyranose = L-ribulose. Its pathway is carbohydrate degradation; L-arabinose degradation via L-ribulose; D-xylulose 5-phosphate from L-arabinose (bacterial route): step 1/3. Catalyzes the conversion of L-arabinose to L-ribulose. The polypeptide is L-arabinose isomerase (Levilactobacillus brevis (strain ATCC 367 / BCRC 12310 / CIP 105137 / JCM 1170 / LMG 11437 / NCIMB 947 / NCTC 947) (Lactobacillus brevis)).